A 469-amino-acid polypeptide reads, in one-letter code: 3-isopropylmalate dehydratase large subunit (469 aa).

Residues Cys349, Cys410, and Cys413 each coordinate [4Fe-4S] cluster.

The protein belongs to the aconitase/IPM isomerase family. LeuC type 1 subfamily. Heterodimer of LeuC and LeuD. The cofactor is [4Fe-4S] cluster.

It catalyses the reaction (2R,3S)-3-isopropylmalate = (2S)-2-isopropylmalate. It functions in the pathway amino-acid biosynthesis; L-leucine biosynthesis; L-leucine from 3-methyl-2-oxobutanoate: step 2/4. Its function is as follows. Catalyzes the isomerization between 2-isopropylmalate and 3-isopropylmalate, via the formation of 2-isopropylmaleate. The polypeptide is 3-isopropylmalate dehydratase large subunit (Neisseria meningitidis serogroup C (strain 053442)).